The sequence spans 395 residues: Putative gustatory receptor 58a (395 aa).

The Cytoplasmic segment spans residues 1–32 (MLLKFMYIYGIGCGLMPAPLKKGQFLLGYKQR). A helical membrane pass occupies residues 33-53 (WYLIYTACLHGGLLTVLPFTF). The Extracellular portion of the chain corresponds to 54 to 72 (PHYMYDDSYMSSNPVLKWT). A helical membrane pass occupies residues 73–93 (FNLTNITRIMAMFSGVLLMWF). Residues 94-131 (RRKRILNLGENLILHCLKCKTLDNRSKKYSKLRKRVRN) lie on the Cytoplasmic side of the membrane. Residues 132–152 (VLFQMLLVANLSILLGALILF) form a helical membrane-spanning segment. At 153–169 (RIHSVQRISKTAMIVAH) the chain is on the extracellular side. Residues 170–190 (ITQFIYVVFMMTGICVILLVL) form a helical membrane-spanning segment. Over 191–250 (HWQSERLQIALKDLCSFLNHEERNSLTLSENKANRSLGKLAKLFKLFAENQRLVREVFRT) the chain is Cytoplasmic. Residues 251 to 271 (FDLPIALLLLKMFVTNVNLVY) traverse the membrane as a helical segment. Residues 272-288 (HGVQFGNDTIETSSYTR) lie on the Extracellular side of the membrane. The N-linked (GlcNAc...) asparagine glycan is linked to N278. The chain crosses the membrane as a helical span at residues 289–309 (IVGQWVVISHYWSAVLLMNVV). Over 310 to 366 (DDVTRRSDLKMGDLLREFSHLELVKRDFHLQLELFSDHLRCHPSTYKVCGLFIFNKQ) the chain is Cytoplasmic. The helical transmembrane segment at 367 to 387 (TSLAYFFYVLVQVLVLVQFDL) threads the bilayer. The Extracellular segment spans residues 388–395 (KNKVEKRN).

This sequence belongs to the insect chemoreceptor superfamily. Gustatory receptor (GR) family. Gr22e subfamily. Expressed in the adult labellar chemosensory neurons.

It localises to the cell membrane. Probable gustatory receptor which mediates acceptance or avoidance behavior, depending on its substrates. The protein is Putative gustatory receptor 58a (Gr58a) of Drosophila melanogaster (Fruit fly).